Consider the following 291-residue polypeptide: MDPIRKPAWLQKKIIPAAHAEMEGLLKELRLNTVCQQARCPNITECFGKRQATFLILGRICTRLCSFCSVSKETPLPLEPGEAASVAEAVKRLGLSHVVITSPTRDDLPDGGASVYAETVARIRSVSPATKVELLIPDFRGDWAALAAVVESAPDILGHNLETVPRLYSIRSGADYRRSLDLLAQARRMAPGLNTKSGLMLGLGEEEAELFAVMEDLLKAGCGYLSLGQYLAPSRMHHPVQRYVEPELFERYKERALTMGFEHVESAPYVRSSYHAENYLESKFPPPEGEG.

[4Fe-4S] cluster contacts are provided by Cys35, Cys40, Cys46, Cys61, Cys65, Cys68, and Ser273. A Radical SAM core domain is found at 47-262 (FGKRQATFLI…KERALTMGFE (216 aa)).

Belongs to the radical SAM superfamily. Lipoyl synthase family. It depends on [4Fe-4S] cluster as a cofactor.

Its subcellular location is the cytoplasm. It carries out the reaction [[Fe-S] cluster scaffold protein carrying a second [4Fe-4S](2+) cluster] + N(6)-octanoyl-L-lysyl-[protein] + 2 oxidized [2Fe-2S]-[ferredoxin] + 2 S-adenosyl-L-methionine + 4 H(+) = [[Fe-S] cluster scaffold protein] + N(6)-[(R)-dihydrolipoyl]-L-lysyl-[protein] + 4 Fe(3+) + 2 hydrogen sulfide + 2 5'-deoxyadenosine + 2 L-methionine + 2 reduced [2Fe-2S]-[ferredoxin]. The protein operates within protein modification; protein lipoylation via endogenous pathway; protein N(6)-(lipoyl)lysine from octanoyl-[acyl-carrier-protein]: step 2/2. Its function is as follows. Catalyzes the radical-mediated insertion of two sulfur atoms into the C-6 and C-8 positions of the octanoyl moiety bound to the lipoyl domains of lipoate-dependent enzymes, thereby converting the octanoylated domains into lipoylated derivatives. The chain is Lipoyl synthase from Citrifermentans bemidjiense (strain ATCC BAA-1014 / DSM 16622 / JCM 12645 / Bem) (Geobacter bemidjiensis).